Here is a 128-residue protein sequence, read N- to C-terminus: Lutropin subunit beta (128 aa).

Cystine bridges form between Cys-18–Cys-66, Cys-32–Cys-81, Cys-35–Cys-119, Cys-43–Cys-97, Cys-47–Cys-99, and Cys-102–Cys-109. An N-linked (GlcNAc...) asparagine glycan is attached at Asn-22.

Belongs to the glycoprotein hormones subunit beta family. In terms of assembly, heterodimer of a common alpha chain and a unique beta chain which confers biological specificity to thyrotropin, lutropin, follitropin and gonadotropin.

The protein localises to the secreted. Functionally, promotes spermatogenesis and ovulation by stimulating the testes and ovaries to synthesize steroids. This chain is Lutropin subunit beta (LHB), found in Struthio camelus (Common ostrich).